The primary structure comprises 24 residues: Acetylcholine receptor subunit alpha (24 aa).

It belongs to the ligand-gated ion channel (TC 1.A.9) family. Acetylcholine receptor (TC 1.A.9.1) subfamily. Alpha-1/CHRNA1 sub-subfamily. As to quaternary structure, one of the alpha chains that assemble within the acetylcholine receptor, a pentamer of two alpha chains, a beta, a delta, and a gamma or epsilon chains.

The protein localises to the postsynaptic cell membrane. Its subcellular location is the cell membrane. It catalyses the reaction K(+)(in) = K(+)(out). The enzyme catalyses Na(+)(in) = Na(+)(out). Its function is as follows. Upon acetylcholine binding, the AChR responds by an extensive change in conformation that affects all subunits and leads to opening of an ion-conducting channel across the plasma membrane. The polypeptide is Acetylcholine receptor subunit alpha (chrna1) (Electrophorus electricus (Electric eel)).